The sequence spans 468 residues: ATP synthase subunit beta (468 aa).

156–163 lines the ATP pocket; it reads GGAGVGKT.

It belongs to the ATPase alpha/beta chains family. F-type ATPases have 2 components, CF(1) - the catalytic core - and CF(0) - the membrane proton channel. CF(1) has five subunits: alpha(3), beta(3), gamma(1), delta(1), epsilon(1). CF(0) has three main subunits: a(1), b(2) and c(9-12). The alpha and beta chains form an alternating ring which encloses part of the gamma chain. CF(1) is attached to CF(0) by a central stalk formed by the gamma and epsilon chains, while a peripheral stalk is formed by the delta and b chains.

It is found in the cell inner membrane. It catalyses the reaction ATP + H2O + 4 H(+)(in) = ADP + phosphate + 5 H(+)(out). Its function is as follows. Produces ATP from ADP in the presence of a proton gradient across the membrane. The catalytic sites are hosted primarily by the beta subunits. The sequence is that of ATP synthase subunit beta from Sulfurimonas denitrificans (strain ATCC 33889 / DSM 1251) (Thiomicrospira denitrificans (strain ATCC 33889 / DSM 1251)).